The sequence spans 586 residues: Asparagine synthetase [glutamine-hydrolyzing] 1 (586 aa).

Cys2 (for GATase activity) is an active-site residue. The Glutamine amidotransferase type-2 domain maps to 2 to 185 (CGILAVLGCS…PGHLYSSRER (184 aa)). L-glutamine is bound by residues 50 to 54 (RLAIV), 75 to 77 (NGE), and Asp98. The Asparagine synthetase domain occupies 193–516 (PTWFSESIPS…PQNSARLTVP (324 aa)). Residues Leu231, Val267, and 341-342 (SG) contribute to the ATP site.

The enzyme catalyses L-aspartate + L-glutamine + ATP + H2O = L-asparagine + L-glutamate + AMP + diphosphate + H(+). It functions in the pathway amino-acid biosynthesis; L-asparagine biosynthesis; L-asparagine from L-aspartate (L-Gln route): step 1/1. This Lotus japonicus (Lotus corniculatus var. japonicus) protein is Asparagine synthetase [glutamine-hydrolyzing] 1 (AS1).